Here is a 180-residue protein sequence, read N- to C-terminus: Large ribosomal subunit protein uL5 (180 aa).

The protein belongs to the universal ribosomal protein uL5 family. As to quaternary structure, part of the 50S ribosomal subunit; part of the 5S rRNA/L5/L18/L25 subcomplex. Contacts the 5S rRNA and the P site tRNA. Forms a bridge to the 30S subunit in the 70S ribosome.

Its function is as follows. This is one of the proteins that bind and probably mediate the attachment of the 5S RNA into the large ribosomal subunit, where it forms part of the central protuberance. In the 70S ribosome it contacts protein S13 of the 30S subunit (bridge B1b), connecting the 2 subunits; this bridge is implicated in subunit movement. Contacts the P site tRNA; the 5S rRNA and some of its associated proteins might help stabilize positioning of ribosome-bound tRNAs. The polypeptide is Large ribosomal subunit protein uL5 (Rubrobacter xylanophilus (strain DSM 9941 / JCM 11954 / NBRC 16129 / PRD-1)).